We begin with the raw amino-acid sequence, 353 residues long: Chorismate synthase (353 aa).

NADP(+) contacts are provided by Arg-48 and Arg-54. FMN contacts are provided by residues 125-127, 238-239, Gly-278, 293-297, and Arg-319; these read RSS, NA, and KPTSS.

This sequence belongs to the chorismate synthase family. As to quaternary structure, homotetramer. The cofactor is FMNH2.

It carries out the reaction 5-O-(1-carboxyvinyl)-3-phosphoshikimate = chorismate + phosphate. The protein operates within metabolic intermediate biosynthesis; chorismate biosynthesis; chorismate from D-erythrose 4-phosphate and phosphoenolpyruvate: step 7/7. Catalyzes the anti-1,4-elimination of the C-3 phosphate and the C-6 proR hydrogen from 5-enolpyruvylshikimate-3-phosphate (EPSP) to yield chorismate, which is the branch point compound that serves as the starting substrate for the three terminal pathways of aromatic amino acid biosynthesis. This reaction introduces a second double bond into the aromatic ring system. The polypeptide is Chorismate synthase (Bordetella parapertussis (strain 12822 / ATCC BAA-587 / NCTC 13253)).